Here is a 307-residue protein sequence, read N- to C-terminus: Fructokinase (307 aa).

Belongs to the carbohydrate kinase PfkB family.

The catalysed reaction is D-fructose + ATP = D-fructose 6-phosphate + ADP + H(+). This is Fructokinase (scrK) from Salmonella typhimurium.